The primary structure comprises 226 residues: Small ribosomal subunit protein uS3 (226 aa).

Residues 39–107 enclose the KH type-2 domain; the sequence is VRNFIRKKLA…PVHINIEEIR (69 aa).

It belongs to the universal ribosomal protein uS3 family. In terms of assembly, part of the 30S ribosomal subunit. Forms a tight complex with proteins S10 and S14.

Functionally, binds the lower part of the 30S subunit head. Binds mRNA in the 70S ribosome, positioning it for translation. The protein is Small ribosomal subunit protein uS3 of Alkalilimnicola ehrlichii (strain ATCC BAA-1101 / DSM 17681 / MLHE-1).